Here is a 273-residue protein sequence, read N- to C-terminus: 2-dehydro-3-deoxyphosphooctonate aldolase (273 aa).

Belongs to the KdsA family.

The protein localises to the cytoplasm. The enzyme catalyses D-arabinose 5-phosphate + phosphoenolpyruvate + H2O = 3-deoxy-alpha-D-manno-2-octulosonate-8-phosphate + phosphate. Its pathway is carbohydrate biosynthesis; 3-deoxy-D-manno-octulosonate biosynthesis; 3-deoxy-D-manno-octulosonate from D-ribulose 5-phosphate: step 2/3. It functions in the pathway bacterial outer membrane biogenesis; lipopolysaccharide biosynthesis. This Citrifermentans bemidjiense (strain ATCC BAA-1014 / DSM 16622 / JCM 12645 / Bem) (Geobacter bemidjiensis) protein is 2-dehydro-3-deoxyphosphooctonate aldolase.